Reading from the N-terminus, the 822-residue chain is Glycerol-3-phosphate acyltransferase (822 aa).

The short motif at 304 to 309 is the HXXXXD motif element; the sequence is CHRSHM.

This sequence belongs to the GPAT/DAPAT family.

It localises to the cell inner membrane. It carries out the reaction sn-glycerol 3-phosphate + an acyl-CoA = a 1-acyl-sn-glycero-3-phosphate + CoA. It functions in the pathway phospholipid metabolism; CDP-diacylglycerol biosynthesis; CDP-diacylglycerol from sn-glycerol 3-phosphate: step 1/3. In Yersinia enterocolitica serotype O:8 / biotype 1B (strain NCTC 13174 / 8081), this protein is Glycerol-3-phosphate acyltransferase.